The sequence spans 339 residues: Anthranilate phosphoribosyltransferase (339 aa).

Residues glycine 79, glycine 82 to aspartate 83, serine 87, asparagine 89 to threonine 92, lysine 107 to serine 115, and serine 119 each bind 5-phospho-alpha-D-ribose 1-diphosphate. An anthranilate-binding site is contributed by glycine 79. Mg(2+) is bound at residue serine 91. An anthranilate-binding site is contributed by asparagine 110. Residue arginine 165 coordinates anthranilate. Residues aspartate 224 and glutamate 225 each coordinate Mg(2+).

This sequence belongs to the anthranilate phosphoribosyltransferase family. Homodimer. The cofactor is Mg(2+).

The enzyme catalyses N-(5-phospho-beta-D-ribosyl)anthranilate + diphosphate = 5-phospho-alpha-D-ribose 1-diphosphate + anthranilate. Its pathway is amino-acid biosynthesis; L-tryptophan biosynthesis; L-tryptophan from chorismate: step 2/5. In terms of biological role, catalyzes the transfer of the phosphoribosyl group of 5-phosphorylribose-1-pyrophosphate (PRPP) to anthranilate to yield N-(5'-phosphoribosyl)-anthranilate (PRA). This Listeria innocua serovar 6a (strain ATCC BAA-680 / CLIP 11262) protein is Anthranilate phosphoribosyltransferase.